A 171-amino-acid polypeptide reads, in one-letter code: Ribosome maturation factor RimM (171 aa).

Residues 97–170 (EGEYYYHEVI…QVTIHVMEGL (74 aa)) form the PRC barrel domain.

The protein belongs to the RimM family. As to quaternary structure, binds ribosomal protein uS19.

It is found in the cytoplasm. An accessory protein needed during the final step in the assembly of 30S ribosomal subunit, possibly for assembly of the head region. Essential for efficient processing of 16S rRNA. May be needed both before and after RbfA during the maturation of 16S rRNA. It has affinity for free ribosomal 30S subunits but not for 70S ribosomes. In Bacillus cytotoxicus (strain DSM 22905 / CIP 110041 / 391-98 / NVH 391-98), this protein is Ribosome maturation factor RimM.